Reading from the N-terminus, the 637-residue chain is Biosynthetic arginine decarboxylase (637 aa).

Lysine 101 is modified (N6-(pyridoxal phosphate)lysine). Substrate is bound at residue 286–296 (VDIGGGLGVDY).

It belongs to the Orn/Lys/Arg decarboxylase class-II family. SpeA subfamily. Mg(2+) serves as cofactor. It depends on pyridoxal 5'-phosphate as a cofactor.

It carries out the reaction L-arginine + H(+) = agmatine + CO2. It participates in amine and polyamine biosynthesis; agmatine biosynthesis; agmatine from L-arginine: step 1/1. Its function is as follows. Catalyzes the biosynthesis of agmatine from arginine. The sequence is that of Biosynthetic arginine decarboxylase from Marinobacter nauticus (strain ATCC 700491 / DSM 11845 / VT8) (Marinobacter aquaeolei).